Reading from the N-terminus, the 120-residue chain is Basic phospholipase A2 homolog piratoxin-3 (120 aa).

Cystine bridges form between C26–C113, C28–C44, C43–C94, C49–C120, C50–C87, C57–C81, and C75–C85. The tract at residues 104–115 (KKYRYHLKPCKK) is important for membrane-damaging activities in eukaryotes and bacteria; heparin-binding.

This sequence belongs to the phospholipase A2 family. Group II subfamily. D49 sub-subfamily. Homodimer; non-covalently linked (probable alternative/compact dimer conformation). In terms of tissue distribution, expressed by the venom gland.

The protein resides in the secreted. Functionally, snake venom phospholipase A2 (PLA2) that lacks enzymatic activity. Shows high myotoxin activities. Also has anticoagulant activity. A model of myotoxic mechanism has been proposed: an apo Lys49-PLA2 is activated by the entrance of a hydrophobic molecule (e.g. fatty acid) at the hydrophobic channel of the protein leading to a reorientation of a monomer. This reorientation causes a transition between 'inactive' to 'active' states, causing alignment of C-terminal and membrane-docking sites (MDoS) side-by-side and putting the membrane-disruption sites (MDiS) in the same plane, exposed to solvent and in a symmetric position for both monomers. The MDoS region stabilizes the toxin on membrane by the interaction of charged residues with phospholipid head groups. Subsequently, the MDiS region destabilizes the membrane with penetration of hydrophobic residues. This insertion causes a disorganization of the membrane, allowing an uncontrolled influx of ions (i.e. calcium and sodium), and eventually triggering irreversible intracellular alterations and cell death. This is Basic phospholipase A2 homolog piratoxin-3 from Bothrops pirajai (Piraja's lancehead).